Reading from the N-terminus, the 52-residue chain is LIRRPLLSFLAPSRIFDQTFGEHLQESELLPASPGFSSFLMRSPIFRMPSWV.

The protein belongs to the small heat shock protein (HSP20) family. In terms of assembly, homodimer. Aggregates with homologous proteins, including alpha-A-crystallin and the small heat shock protein HSPB1, to form large heteromeric complexes.

May contribute to the transparency and refractive index of the lens. This Eudromia elegans (Elegant crested-tinamou) protein is Alpha-crystallin B chain (CRYAB).